The primary structure comprises 467 residues: Ribulose bisphosphate carboxylase large chain (467 aa).

Position 5 is an N6,N6,N6-trimethyllysine (Lys-5). The substrate site is built by Asn-114 and Thr-164. Lys-166 (proton acceptor) is an active-site residue. Substrate is bound at residue Lys-168. Residues Lys-192, Asp-194, and Glu-195 each contribute to the Mg(2+) site. Position 192 is an N6-carboxylysine (Lys-192). The active-site Proton acceptor is the His-285. Positions 286, 318, and 370 each coordinate substrate.

It belongs to the RuBisCO large chain family. Type I subfamily. As to quaternary structure, heterohexadecamer of 8 large chains and 8 small chains; disulfide-linked. The disulfide link is formed within the large subunit homodimers. Requires Mg(2+) as cofactor. The disulfide bond which can form in the large chain dimeric partners within the hexadecamer appears to be associated with oxidative stress and protein turnover.

The protein resides in the plastid. It is found in the chloroplast. The catalysed reaction is 2 (2R)-3-phosphoglycerate + 2 H(+) = D-ribulose 1,5-bisphosphate + CO2 + H2O. It catalyses the reaction D-ribulose 1,5-bisphosphate + O2 = 2-phosphoglycolate + (2R)-3-phosphoglycerate + 2 H(+). Functionally, ruBisCO catalyzes two reactions: the carboxylation of D-ribulose 1,5-bisphosphate, the primary event in carbon dioxide fixation, as well as the oxidative fragmentation of the pentose substrate in the photorespiration process. Both reactions occur simultaneously and in competition at the same active site. This Hydrophyllum virginianum (Eastern waterleaf) protein is Ribulose bisphosphate carboxylase large chain.